A 107-amino-acid polypeptide reads, in one-letter code: Nucleoid-associated protein Pnuc_0701 (107 aa).

Belongs to the YbaB/EbfC family. In terms of assembly, homodimer.

The protein localises to the cytoplasm. It localises to the nucleoid. In terms of biological role, binds to DNA and alters its conformation. May be involved in regulation of gene expression, nucleoid organization and DNA protection. This chain is Nucleoid-associated protein Pnuc_0701, found in Polynucleobacter asymbioticus (strain DSM 18221 / CIP 109841 / QLW-P1DMWA-1) (Polynucleobacter necessarius subsp. asymbioticus).